A 349-amino-acid polypeptide reads, in one-letter code: Isopentenyl-diphosphate delta-isomerase (349 aa).

A substrate-binding site is contributed by 9–10 (RK). FMN-binding positions include 65–67 (AMT), Ser-95, and Asn-124. 95–97 (STH) provides a ligand contact to substrate. Residue Gln-154 participates in substrate binding. Glu-155 serves as a coordination point for Mg(2+). FMN is bound by residues Lys-186, Ser-211, Thr-216, 262-264 (GLR), and 283-284 (SR).

This sequence belongs to the IPP isomerase type 2 family. Homooctamer. Dimer of tetramers. FMN serves as cofactor. Requires NADPH as cofactor. The cofactor is Mg(2+).

Its subcellular location is the cytoplasm. It catalyses the reaction isopentenyl diphosphate = dimethylallyl diphosphate. Its function is as follows. Involved in the biosynthesis of isoprenoids. Catalyzes the 1,3-allylic rearrangement of the homoallylic substrate isopentenyl (IPP) to its allylic isomer, dimethylallyl diphosphate (DMAPP). The polypeptide is Isopentenyl-diphosphate delta-isomerase (Staphylococcus aureus (strain MSSA476)).